Consider the following 271-residue polypeptide: Thioredoxin-related transmembrane protein 2 homolog (271 aa).

Positions 1–28 are cleaved as a signal peptide; it reads MTWKKQMALLAKPYYWVNILLAISYLLA. The Extracellular portion of the chain corresponds to 29-102; the sequence is KKTQFICTRL…AILWAYADFR (74 aa). The chain crosses the membrane as a helical span at residues 103–123; that stretch reads YGLGFLLLCVLVGMVLPEPSY. The Thioredoxin domain maps to 112-262; the sequence is VLVGMVLPEP…YKEAIERLPI (151 aa). At 124–271 the chain is on the cytoplasmic side; it reads RGPEHITYFR…IAPKEAKKVQ (148 aa). The short motif at 268–271 is the Di-lysine motif element; it reads KKVQ.

The protein resides in the membrane. The polypeptide is Thioredoxin-related transmembrane protein 2 homolog (Drosophila melanogaster (Fruit fly)).